A 207-amino-acid polypeptide reads, in one-letter code: Large ribosomal subunit protein uL4 (207 aa).

A compositionally biased stretch (basic and acidic residues) spans 44 to 58; it reads RAPTRATRERSDVAR. The segment at 44–82 is disordered; sequence RAPTRATRERSDVARSGKKFGRQKGGGTARHGDRRSPIF.

Belongs to the universal ribosomal protein uL4 family. In terms of assembly, part of the 50S ribosomal subunit.

One of the primary rRNA binding proteins, this protein initially binds near the 5'-end of the 23S rRNA. It is important during the early stages of 50S assembly. It makes multiple contacts with different domains of the 23S rRNA in the assembled 50S subunit and ribosome. Functionally, forms part of the polypeptide exit tunnel. In Zymomonas mobilis subsp. mobilis (strain ATCC 31821 / ZM4 / CP4), this protein is Large ribosomal subunit protein uL4.